The primary structure comprises 371 residues: Cytoplasmic tRNA 2-thiolation protein 1 (371 aa).

It belongs to the TtcA family. CTU1/NCS6/ATPBD3 subfamily.

The protein resides in the cytoplasm. It functions in the pathway tRNA modification; 5-methoxycarbonylmethyl-2-thiouridine-tRNA biosynthesis. Plays a central role in 2-thiolation of mcm(5)S(2)U at tRNA wobble positions of tRNA(Lys), tRNA(Glu) and tRNA(Gln). Directly binds tRNAs and probably acts by catalyzing adenylation of tRNAs, an intermediate required for 2-thiolation. It is unclear whether it acts as a sulfurtransferase that transfers sulfur from thiocarboxylated URM1 onto the uridine of tRNAs at wobble position. Prior mcm(5) tRNA modification by the elongator complex is required for 2-thiolation. May also be involved in protein urmylation. The sequence is that of Cytoplasmic tRNA 2-thiolation protein 1 from Kluyveromyces lactis (strain ATCC 8585 / CBS 2359 / DSM 70799 / NBRC 1267 / NRRL Y-1140 / WM37) (Yeast).